The primary structure comprises 575 residues: Probable methionine--tRNA ligase, mitochondrial (575 aa).

The 'HIGH' region motif lies at 52–62 (FYVNGPPHIGH). The 'KMSKS' region signature appears at 352 to 356 (KMSKS). Lys-355 contributes to the ATP binding site.

Belongs to the class-I aminoacyl-tRNA synthetase family.

It is found in the mitochondrion matrix. It carries out the reaction tRNA(Met) + L-methionine + ATP = L-methionyl-tRNA(Met) + AMP + diphosphate. This is Probable methionine--tRNA ligase, mitochondrial (mmetS) from Dictyostelium discoideum (Social amoeba).